A 399-amino-acid polypeptide reads, in one-letter code: 1-deoxy-D-xylulose 5-phosphate reductoisomerase (399 aa).

NADPH-binding residues include Thr-11, Gly-12, Ser-13, Ile-14, and Asn-125. Lys-126 contacts 1-deoxy-D-xylulose 5-phosphate. Glu-127 contributes to the NADPH binding site. Asp-151 is a binding site for Mn(2+). Positions 152, 153, 186, and 209 each coordinate 1-deoxy-D-xylulose 5-phosphate. Glu-153 is a Mn(2+) binding site. Gly-215 lines the NADPH pocket. Positions 222, 227, 228, and 231 each coordinate 1-deoxy-D-xylulose 5-phosphate. Glu-231 is a binding site for Mn(2+).

It belongs to the DXR family. Mg(2+) serves as cofactor. Requires Mn(2+) as cofactor.

The enzyme catalyses 2-C-methyl-D-erythritol 4-phosphate + NADP(+) = 1-deoxy-D-xylulose 5-phosphate + NADPH + H(+). Its pathway is isoprenoid biosynthesis; isopentenyl diphosphate biosynthesis via DXP pathway; isopentenyl diphosphate from 1-deoxy-D-xylulose 5-phosphate: step 1/6. Its function is as follows. Catalyzes the NADPH-dependent rearrangement and reduction of 1-deoxy-D-xylulose-5-phosphate (DXP) to 2-C-methyl-D-erythritol 4-phosphate (MEP). The chain is 1-deoxy-D-xylulose 5-phosphate reductoisomerase from Acinetobacter baumannii (strain SDF).